The chain runs to 148 residues: SPbeta prophage-derived uncharacterized protein YomK (148 aa).

The next 2 membrane-spanning stretches (helical) occupy residues 72–92 (WGIG…LFGV) and 104–124 (NALI…RNII).

The protein localises to the cell membrane. The sequence is that of SPbeta prophage-derived uncharacterized protein YomK (yomK) from Bacillus subtilis (strain 168).